The chain runs to 446 residues: MSQKTLFTKSALAVAVALISTQAWSAGFQLNEFSSSGLGRAYSGEGAIADDAGNVSRNPALITMFDRPTFSAGAVYIDPDVDITGHSDLTGQSANAKNIAPTAWVPNLHFVAPINDQFGWGASITSNYGLATEFTDNYAAGIYGGKTDLQTINLNLSGAYRLNNSWSFGLGFDAVYAKAKIERYAGSLGPLLSQQLIAQGVPASLTNGINTPDSQIAHLKGDEWGFGWNAGILYELDKDNRWGLTYRSEVKIDFDGDYKSSINPNLNNILGNMGLPYGTMGATQNGSLTLNLPEMWEISGYNRVAPQWAIHYSMAYTSWSQFQELKAKGDSGQTLFYKDEGFRDAYRIALGTTYYYDKNWTFRTGIAYDDSPVPADKRSISIPDQDRLWLSAGLTYAFNEDASIDVGASYMHGQKVKFTEGEGAAAYSFESEGKAWLFGTNFNYAF.

Residues Met-1–Ser-25 form the signal peptide.

The protein belongs to the OmpP1/FadL family.

Its subcellular location is the cell outer membrane. In terms of biological role, involved in translocation of long-chain fatty acids across the outer membrane. FadL may form a specific channel. This chain is Long-chain fatty acid transport protein (fadL), found in Escherichia coli O6:H1 (strain CFT073 / ATCC 700928 / UPEC).